The following is a 1093-amino-acid chain: Synaptopodin-2 (1093 aa).

Positions methionine 1–glutamate 180 are interaction with VPS18. The 83-residue stretch at phenylalanine 6–serine 88 folds into the PDZ domain. Disordered regions lie at residues glutamate 144–glutamine 174 and alanine 211–leucine 233. Over residues glutamate 222 to leucine 233 the composition is skewed to basic and acidic residues. A phosphoserine mark is found at serine 274, serine 310, serine 329, and serine 330. Residues serine 329–valine 369 are disordered. Residue threonine 333 is modified to Phosphothreonine. Positions serine 346–leucine 358 are enriched in basic residues. The segment covering arginine 359–valine 369 has biased composition (basic and acidic residues). A Nuclear localization signal motif is present at residues lysine 398–lysine 406. 3 interaction with ACTN2 regions span residues methionine 481–serine 663, serine 664–alanine 924, and glutamine 901–glutamate 1093. 2 disordered regions span residues alanine 507–valine 803 and alanine 834–glycine 870. 2 F-actin binding regions span residues threonine 534 to serine 663 and serine 664 to valine 803. A phosphoserine mark is found at serine 548, serine 549, and serine 551. Polar residues-rich tracts occupy residues proline 565–isoleucine 579 and serine 595–serine 611. Position 604 is a phosphoserine (serine 604). The interval arginine 607–proline 811 is interaction with YWHAB. Threonine 610 carries the post-translational modification Phosphothreonine. At serine 611 the chain carries Phosphoserine. Positions aspartate 615–threonine 626 are interaction with BAG3. Composition is skewed to pro residues over residues proline 617 to aspartate 630 and alanine 644 to tryptophan 655. Positions proline 619 to tyrosine 622 match the PPPY motif motif. Tyrosine 622 is modified (phosphotyrosine). Threonine 626 bears the Phosphothreonine mark. Residues serine 663 to isoleucine 674 are compositionally biased toward basic and acidic residues. Positions serine 664–asparagine 916 are F-actin bundling activity. 2 positions are modified to phosphoserine: serine 705 and serine 729. Residues alanine 751–alanine 900 are actin binding. Phosphothreonine is present on residues threonine 755 and threonine 774. Positions lysine 762–valine 784 are enriched in low complexity. 2 positions are modified to phosphoserine: serine 777 and serine 781. 2 stretches are compositionally biased toward polar residues: residues proline 793–valine 803 and valine 835–alanine 853. The interaction with FLNC stretch occupies residues glutamine 810 to glutamate 1093. Phosphoserine occurs at positions 902, 906, and 910. The disordered stretch occupies residues alanine 937–lysine 956. The segment at leucine 1000–valine 1019 is interaction with ZYX. The residue at position 1015 (serine 1015) is a Phosphoserine. The segment covering serine 1041–proline 1050 has biased composition (low complexity). The disordered stretch occupies residues serine 1041–serine 1064. Position 1056 is a phosphoserine (serine 1056).

The protein belongs to the synaptopodin family. As to quaternary structure, may self-associate in muscle cells under oxidative stress. Binds F-actin. Interacts with ACTN2; ACTN2 is proposed to anchor SYOP2 at Z lines in mature myocytes. Interacts with AKAP6, PPP3CA and CAMK2A. Interacts (phosphorylated form) with YWHAB; YWHAB competes with ACTN2 for interaction with SYNPO2. Interacts with KPNA2; mediating nuclear import of SYNOP2; dependent on interaction with YWHAB. Interacts with IPO13; may be implicated in SYNOP2 nuclear import. Interacts with ZYX, FLNC, ILK. Interacts with BAG3 (via WW 1 domain). May associate with the CASA complex consisting of HSPA8, HSPB8 and BAG3. Interacts with VPS18. In terms of processing, phosphorylated by PKA, and by CaMK2 at multiple sites. Dephosphorylated by calcineurin; abrogating interaction with YWHAB and impairing nuclear import. Phosphorylated by ILK. As to expression, expressed in heart muscle. Isoform 5 is specifically expressed in skeletal muscle.

It is found in the nucleus. Its subcellular location is the cytoplasm. It localises to the cytoskeleton. The protein localises to the myofibril. The protein resides in the sarcomere. It is found in the z line. Its subcellular location is the cell junction. It localises to the focal adhesion. Functionally, has an actin-binding and actin-bundling activity. Can induce the formation of F-actin networks in an isoform-specific manner. At the sarcomeric Z lines is proposed to act as adapter protein that links nascent myofibers to the sarcolemma via ZYX and may play a role in early assembly and stabilization of the Z lines. Involved in autophagosome formation. May play a role in chaperone-assisted selective autophagy (CASA) involved in Z lines maintenance in striated muscle under mechanical tension; may link the client-processing CASA chaperone machinery to a membrane-tethering and fusion complex providing autophagosome membranes. Involved in regulation of cell migration. May be a tumor suppressor. Its function is as follows. Involved in regulation of cell migration. Can induce formation of thick, irregular actin bundles in the cell body. Involved in regulation of cell migration. Can induce long, well-organized actin bundles frequently orientated in parallel along the long axis of the cell showing characteristics of contractile ventral stress fibers. In terms of biological role, involved in regulation of cell migration. Can induce an amorphous actin meshwork throughout the cell body containing a mixture of long and short, randomly organized thick and thin actin bundles. Functionally, can induce long, well-organized actin bundles frequently orientated in parallel along the long axis of the cell showing characteristics of contractile ventral stress fibers. Its function is as follows. Involved in regulation of cell migration in part dependent on the Rho-ROCK cascade; can promote formation of nascent focal adhesions, actin bundles at the leading cell edge and lamellipodia. Can induce formation of thick, irregular actin bundles in the cell body; the induced actin network is associated with enhanced cell migration in vitro. The protein is Synaptopodin-2 (SYNPO2) of Homo sapiens (Human).